The following is a 127-amino-acid chain: Small ribosomal subunit protein uS12 (127 aa).

3-methylthioaspartic acid is present on D89. Residues 104–127 form a disordered region; that stretch reads TQGVKDRKQARSKYGTKRAKAGKK. The span at 113–127 shows a compositional bias: basic residues; sequence ARSKYGTKRAKAGKK.

Belongs to the universal ribosomal protein uS12 family. Part of the 30S ribosomal subunit. Contacts proteins S8 and S17. May interact with IF1 in the 30S initiation complex.

Its function is as follows. With S4 and S5 plays an important role in translational accuracy. In terms of biological role, interacts with and stabilizes bases of the 16S rRNA that are involved in tRNA selection in the A site and with the mRNA backbone. Located at the interface of the 30S and 50S subunits, it traverses the body of the 30S subunit contacting proteins on the other side and probably holding the rRNA structure together. The combined cluster of proteins S8, S12 and S17 appears to hold together the shoulder and platform of the 30S subunit. This is Small ribosomal subunit protein uS12 from Herminiimonas arsenicoxydans.